We begin with the raw amino-acid sequence, 310 residues long: Collagen-like protein V6 (310 aa).

Polar residues predominate over residues 1–41; the sequence is MSLSTLFSPNTYNINSKSQTLNNLPSNPTSQTNTLWSNNAY. Residues 1 to 183 are disordered; it reads MSLSTLFSPN…GDPGAKGDPG (183 aa). Collagen-like domains follow at residues 61–119 and 123–182; these read GQKG…KGQA and GLKG…KGDP. Basic and acidic residues predominate over residues 92 to 101; that stretch reads SGDKGDKGDS. N-linked (GlcNAc...) asparagine; by host glycosylation is found at Asn227 and Asn264.

The protein belongs to the sputnik virus V6 family.

This chain is Collagen-like protein V6, found in Sputnik virophage.